Reading from the N-terminus, the 432-residue chain is Amino acid transporter ANT1 (432 aa).

The segment at 1–30 (MAIKDLTATTGDSSLPLIKSPPSETTGGDR) is disordered. Residues 1 to 35 (MAIKDLTATTGDSSLPLIKSPPSETTGGDRTSALQ) lie on the Cytoplasmic side of the membrane. A helical membrane pass occupies residues 36–56 (TLGNIIVSIVGTGVLGLPYAF). Topologically, residues 57 to 62 (RIAGWL) are lumenal. Residues 63–83 (AGSLGVIIVGFATYYCMLLLI) form a helical membrane-spanning segment. Over 84 to 115 (QCRDKLESEEGEEESKTYGDLGFKCMGTKGRY) the chain is Cytoplasmic. The chain crosses the membrane as a helical span at residues 116 to 136 (LTEFLIFTAQCGGSVAYLVFI). Topologically, residues 137-147 (GRNLSSIFSSY) are lumenal. The chain crosses the membrane as a helical span at residues 148–168 (GLSMVSFILILVPIEVGLSWI). The Cytoplasmic portion of the chain corresponds to 169–172 (TSLS). Residues 173-193 (ALSPFSIFADICNIIAMCFVV) traverse the membrane as a helical segment. The Lumenal portion of the chain corresponds to 194-219 (KENVEMVIEGDFSFSDRTAISSTIGG). A helical transmembrane segment spans residues 220 to 240 (LPFAGGVAVFCFEGFAMTLAL). Over 241–256 (ESSMREREAFPKLLAK) the chain is Cytoplasmic. A helical membrane pass occupies residues 257-277 (VLAGITFVYVLFGFCGYMAYG). Topologically, residues 278–292 (DQTKDIITLNLPNNW) are lumenal. Residues 293 to 313 (SAIAVQIGLCVGLTFTFPIMV) form a helical membrane-spanning segment. Residues 314-353 (HPLNEIIEQKLKRIDWLQKHHNGYSNETGSVSKFAIFTTR) are Cytoplasmic-facing. A helical transmembrane segment spans residues 354–374 (TLLVVGLAAIASLVPGFGTFA). At 375–379 (SLVGS) the chain is on the lumenal side. The chain crosses the membrane as a helical span at residues 380–400 (TLCALISFVLPASYHLTLLGP). Topologically, residues 401–410 (SLNVWNKSID) are cytoplasmic. Residues 411–431 (VFIVICGLIFAVYGTYNTIVG) form a helical membrane-spanning segment. Position 432 (Val-432) is a topological domain, lumenal.

It belongs to the amino acid/polyamine transporter 2 family. Amino acid/auxin permease (AAAP) (TC 2.A.18.8) subfamily. In terms of tissue distribution, ubiquitous. Highly expressed in flowers and cauline leaves and at lower levels in stems, leaves and roots.

Its subcellular location is the endoplasmic reticulum membrane. In terms of biological role, translocates aromatic and neutral amino acids such as tyrosine, tryptophan, phenylalanine, histidine, proline, leucine, valine, glutamine, as well as arginine. Transports the auxins indole-3-acetic acid (IAA) and 2,4-dichlorophenoxyacetic acid (2,4-D). The protein is Amino acid transporter ANT1 of Arabidopsis thaliana (Mouse-ear cress).